The primary structure comprises 376 residues: MAPTEATRGGPADPAPAPEAHRGGHTEHADPAEHAAQFGAQERILTLVWGYISSEILDLATRLDLPDLMGTEERAAAELAASLDTDPVATLRLLRAFAALGLAEETGAGRFRLTPAGHRLRTDVPDSLHAFVRQGMGVFRQAWSHFDHSIRTGEPAFDQVFGTDFFSYLSERPELSGTFTSSMREATRTMSTALAKEEEYDFSSYGTVVDIGGADGSLLAAVLSAHPGVEGVVFDSPEGARDAAATLDAAGVGERGRVETGDFFTRVPGGGDLYVLKSILHDWSDARSADILRTVRAAMPAHARLLVVEVLLPDTVDSSAHPLGYLSDLYMLVNMGGRERSERDLRSLLSDTGFRTTRVRTPPGLTPFSLIEAAPV.

Positions 1 to 28 (MAPTEATRGGPADPAPAPEAHRGGHTEH) are disordered. Residues 19–28 (EAHRGGHTEH) show a composition bias toward basic and acidic residues. S-adenosyl-L-methionine contacts are provided by residues Asp-235 and 261–263 (GDF). The active-site Proton acceptor is the His-281.

Belongs to the class I-like SAM-binding methyltransferase superfamily. Cation-independent O-methyltransferase family.

It catalyses the reaction O-demethylpuromycin + S-adenosyl-L-methionine = puromycin + S-adenosyl-L-homocysteine + H(+). The chain is O-demethylpuromycin-O-methyltransferase (dmpM) from Streptomyces alboniger.